Here is an 804-residue protein sequence, read N- to C-terminus: Leucine--tRNA ligase (804 aa).

The 'HIGH' region motif lies at 40–51; it reads PYPSGAGLHVGH. Residues 576-580 carry the 'KMSKS' region motif; the sequence is KMSKS. Lysine 579 contributes to the ATP binding site.

This sequence belongs to the class-I aminoacyl-tRNA synthetase family.

The protein resides in the cytoplasm. It carries out the reaction tRNA(Leu) + L-leucine + ATP = L-leucyl-tRNA(Leu) + AMP + diphosphate. The chain is Leucine--tRNA ligase from Bacillus subtilis (strain 168).